The primary structure comprises 65 residues: Muscarinic toxin-like protein 1 (65 aa).

4 disulfide bridges follow: Cys-3-Cys-24, Cys-17-Cys-42, Cys-46-Cys-57, and Cys-58-Cys-63.

It belongs to the three-finger toxin family. Short-chain subfamily. Type C muscarinic toxin sub-subfamily. As to quaternary structure, monomer. Expressed by the venom gland.

It localises to the secreted. Functionally, binds weakly to the muscarinic acetylcholine receptor (CHRM). The protein is Muscarinic toxin-like protein 1 of Naja kaouthia (Monocled cobra).